A 204-amino-acid chain; its full sequence is Nascent polypeptide-associated complex subunit alpha-like protein 3 (204 aa).

Basic and acidic residues predominate over residues 1 to 23 (MTAEQKVELAAKLEEQKIDLDKP). 2 disordered regions span residues 1–68 (MTAE…AMLK) and 141–165 (GETS…EEGV). Residues 24 to 43 (EVEDDDDNDEDDSEDDDEAE) are compositionally biased toward acidic residues. Residue Ser36 is modified to Phosphoserine. Basic and acidic residues predominate over residues 44 to 59 (GHDGEAGGRSKQSRSE). The 66-residue stretch at 56-121 (SRSEKKSRKA…AKIEDLSSQL (66 aa)) folds into the NAC-A/B domain. Residues 141-152 (GETSSAATAAAV) show a composition bias toward low complexity. Acidic residues predominate over residues 153-164 (QDDDDEEVDEEG). Residues 159-204 (EVDEEGVEPKDIELVMTQAGVSKPRAVKALKLANGDIVSAIMELTT) enclose the UBA domain.

The protein belongs to the NAC-alpha family.

Functionally, may promote appropriate targeting of ribosome-nascent polypeptide complexes. This is Nascent polypeptide-associated complex subunit alpha-like protein 3 from Arabidopsis thaliana (Mouse-ear cress).